Reading from the N-terminus, the 587-residue chain is Glucosylglycerate phosphorylase (587 aa).

Residue Asp236 is the Nucleophile of the active site.

The protein belongs to the glycosyl hydrolase 13 family. Glucosylglycerate phosphorylase subfamily.

The catalysed reaction is (2R)-2-O-(alpha-D-glucopyranosyl)-glycerate + phosphate = (R)-glycerate + alpha-D-glucose 1-phosphate. Catalyzes the reversible phosphorolysis of glucosylglycerate into alpha-D-glucose 1-phosphate (Glc1P) and D-glycerate. May be a regulator of intracellular levels of glucosylglycerate, a compatible solute that primarily protects organisms facing salt stress and very specific nutritional constraints. Cannot catalyze the phosphorolysis of sucrose. The protein is Glucosylglycerate phosphorylase of Spirochaeta thermophila (strain ATCC 700085 / DSM 6578 / Z-1203).